The primary structure comprises 275 residues: Large ribosomal subunit protein uL2 (275 aa).

The interval 225 to 275 (MNPIDHPHGGGEGRTSGGRHPVTPWGKPTKGKKTRSNKKTDRLIMRRRQTQ) is disordered.

This sequence belongs to the universal ribosomal protein uL2 family. Part of the 50S ribosomal subunit. Forms a bridge to the 30S subunit in the 70S ribosome.

Functionally, one of the primary rRNA binding proteins. Required for association of the 30S and 50S subunits to form the 70S ribosome, for tRNA binding and peptide bond formation. It has been suggested to have peptidyltransferase activity; this is somewhat controversial. Makes several contacts with the 16S rRNA in the 70S ribosome. The protein is Large ribosomal subunit protein uL2 of Paramagnetospirillum magneticum (strain ATCC 700264 / AMB-1) (Magnetospirillum magneticum).